The sequence spans 498 residues: Transcription factor bHLH78 (498 aa).

Disordered stretches follow at residues 1–24 (MDNE…FEHQ) and 207–297 (LVSP…PPKD). Residues 233–246 (NPISTASPSPSFSK) show a composition bias toward polar residues. A compositionally biased stretch (basic and acidic residues) spans 259–270 (SSEEKGGKRRRE). Residues 271-281 (EEDDEEEEGEG) show a composition bias toward acidic residues. One can recognise a bHLH domain in the interval 307–357 (QATDSHSLAERVRREKIGERMKLLQDLVPGCNKVTGKALMLDEIINYVQSL).

In terms of assembly, homodimer. Binds reversibly to CRY2 after blue light illumination. As to expression, expressed constitutively in roots, leaves, stems, and flowers.

The protein localises to the nucleus. Its function is as follows. Transcription factor that binds DNA to G box 5'-CACGTG-3' and to E-box 5'-CANNTG-3'. Binds to chromatin DNA of the FT gene and promotes its expression, and thus triggers flowering in response to blue light. The chain is Transcription factor bHLH78 (BHLH78) from Arabidopsis thaliana (Mouse-ear cress).